A 142-amino-acid polypeptide reads, in one-letter code: Hemoglobin A subunit alpha-1 (142 aa).

The Globin domain maps to 2–142 (VLTAGDKANV…VATALTSKYR (141 aa)). Histidine 59 is a binding site for O2. Heme b is bound at residue histidine 88.

Belongs to the globin family. Tetramer of alpha-1, alpha-2 and two identical beta chains. As to expression, red blood cells.

Involved in oxygen transport from the lung to the various peripheral tissues. The protein is Hemoglobin A subunit alpha-1 of Aldabrachelys gigantea (Aldabra giant tortoise).